The sequence spans 221 residues: MADEVILLDFWPSMFGMRTRIALEEKNVKFDYREQDLWNKSPILLEMNPVHKKIPVLIHNGNPVCESLIQIEYIDEVWPSKTPLLPSDPYQRAQAKFWGDFIDKKVYASARLIWGAKGEEHEAGKKEFIEILKTLESELGDKTYFGGETFGYVDIALIGFYSWFEAYEKFGSFSIEAECPKLIAWGKRCVERESVAKSLPDSEKIIKFVPELRKKLGIEIE.

At A2 the chain carries N-acetylalanine. Residues 3–82 form the GST N-terminal domain; the sequence is DEVILLDFWP…YIDEVWPSKT (80 aa). Glutathione is bound by residues 13 to 14, 39 to 40, 53 to 54, and 66 to 67; these read SM, NK, KI, and ES. The GST C-terminal domain occupies 88–208; that stretch reads DPYQRAQAKF…LPDSEKIIKF (121 aa). T149 is subject to Phosphothreonine.

Belongs to the GST superfamily. Tau family.

It localises to the cytoplasm. The protein localises to the cytosol. The enzyme catalyses RX + glutathione = an S-substituted glutathione + a halide anion + H(+). Its function is as follows. May be involved in the conjugation of reduced glutathione to a wide number of exogenous and endogenous hydrophobic electrophiles and have a detoxification role against certain herbicides. This Arabidopsis thaliana (Mouse-ear cress) protein is Glutathione S-transferase U25 (GSTU25).